A 254-amino-acid chain; its full sequence is UPF0246 protein CPF_2407 (254 aa).

It belongs to the UPF0246 family.

The chain is UPF0246 protein CPF_2407 from Clostridium perfringens (strain ATCC 13124 / DSM 756 / JCM 1290 / NCIMB 6125 / NCTC 8237 / Type A).